A 260-amino-acid polypeptide reads, in one-letter code: Tropinone reductase 2 (260 aa).

Position 13–37 (13–37 (LVTGGSRGIGYGIVEELANLGASVY)) interacts with NADP(+). Substrate is bound at residue Ser-146. The Proton acceptor role is filled by Tyr-159.

It belongs to the short-chain dehydrogenases/reductases (SDR) family.

It catalyses the reaction pseudotropine + NADP(+) = tropinone + NADPH + H(+). It functions in the pathway alkaloid biosynthesis; tropane alkaloid biosynthesis. Functionally, catalyzes the stereospecific reduction of tropinone to pseudotropine. The polypeptide is Tropinone reductase 2 (TR2) (Hyoscyamus niger (Black henbane)).